A 202-amino-acid chain; its full sequence is Ribosome maturation factor RimM (202 aa).

The region spanning 121 to 202 is the PRC barrel domain; that stretch reads KDEYYWVDLI…CITVDWQPDY (82 aa).

It belongs to the RimM family. Binds ribosomal protein uS19.

It is found in the cytoplasm. An accessory protein needed during the final step in the assembly of 30S ribosomal subunit, possibly for assembly of the head region. Essential for efficient processing of 16S rRNA. May be needed both before and after RbfA during the maturation of 16S rRNA. It has affinity for free ribosomal 30S subunits but not for 70S ribosomes. The chain is Ribosome maturation factor RimM from Polaromonas sp. (strain JS666 / ATCC BAA-500).